The primary structure comprises 600 residues: ATP-dependent lipid A-core flippase (600 aa).

The next 4 membrane-spanning stretches (helical) occupy residues Val26 to Leu46, Leu82 to Leu102, Val167 to Ile187, and Pro266 to Leu286. The 292-residue stretch at Leu30 to Lys321 folds into the ABC transmembrane type-1 domain. The region spanning Leu353 to Met589 is the ABC transporter domain. Gly387–Ser394 is a binding site for ATP.

The protein belongs to the ABC transporter superfamily. Lipid exporter (TC 3.A.1.106) family. Homodimer.

Its subcellular location is the cell inner membrane. It carries out the reaction ATP + H2O + lipid A-core oligosaccharideSide 1 = ADP + phosphate + lipid A-core oligosaccharideSide 2.. Involved in lipopolysaccharide (LPS) biosynthesis. Translocates lipid A-core from the inner to the outer leaflet of the inner membrane. Transmembrane domains (TMD) form a pore in the inner membrane and the ATP-binding domain (NBD) is responsible for energy generation. This is ATP-dependent lipid A-core flippase from Pseudomonas syringae pv. tomato (strain ATCC BAA-871 / DC3000).